Here is a 441-residue protein sequence, read N- to C-terminus: Xylose isomerase (441 aa).

Residues His105 and Asp108 contribute to the active site. Mg(2+)-binding residues include Glu236, Glu272, His275, Asp300, Asp311, Asp313, and Asp343.

It belongs to the xylose isomerase family. As to quaternary structure, homotetramer. Mg(2+) serves as cofactor.

It is found in the cytoplasm. The enzyme catalyses alpha-D-xylose = alpha-D-xylulofuranose. The chain is Xylose isomerase from Mesorhizobium japonicum (strain LMG 29417 / CECT 9101 / MAFF 303099) (Mesorhizobium loti (strain MAFF 303099)).